A 554-amino-acid polypeptide reads, in one-letter code: MTTHHRVRSSSNSSSNNINNNNNNNNNNNIHQLSSSRTMIDHHNSDPTSSSSPTNESQIHHFSNSNYNYNYDDVDDSTINSNSTNNNNKNRNIQNNNNQNISNNRDNNNNNINSNLNNQTNLINYNDDEDYDEDYEREIEDDEEYEEIGDEESSSGIGGDSEFNDSLNGSKAGSRNREIWINPNIELMLKIALSTTKNPYYYHNIAKKLEEMVGRPISEKLVRSQMTNLLGKNSKFFKHPYREIKSKPGIPKSLINSHNLREKQIWESCKNLITEIKSSPNYYSIGGGSFPTNNNNHNNASGASSSTSTPSTSSASSPASSSSSLSSLSNNNNNNNNNNNNNNNSNSINNSNNAHSIYPNGSNSGNSKNSSSSSSSSSSNNGNCSSNYPSPPLSENHLSLSLPSISKSHSNNTGSFGFSLSSPTTSSSNNSSNNNNNNNNSNQFFSSISDQQPSKKLHVVSPPLQSLQSIQPPISQLNNNNNNHHNNHHQNHHHQNHNHQHHSKKRKIRSYDSKHLEKFQVIREKVIETLSEIDDIINSMKNDSDNDNSEFEDC.

Disordered stretches follow at residues 1-127, 139-173, 293-395, and 416-509; these read MTTH…NYND, IEDD…SKAG, NNNN…PLSE, and FGFS…RKIR. 3 stretches are compositionally biased toward low complexity: residues 9 to 30, 46 to 55, and 63 to 125; these read SSSN…NNNI, DPTSSSSPTN, and SNSN…LINY. Residues 139-153 are compositionally biased toward acidic residues; that stretch reads IEDDEEYEEIGDEES. Polar residues predominate over residues 164-173; that stretch reads NDSLNGSKAG. Composition is skewed to low complexity over residues 293-387, 416-449, and 461-484; these read NNNN…CSSN, FGFS…SSIS, and SPPL…NNNH. Over residues 485–508 the composition is skewed to basic residues; that stretch reads HNNHHQNHHHQNHNHQHHSKKRKI.

This is an uncharacterized protein from Dictyostelium discoideum (Social amoeba).